The following is a 703-amino-acid chain: Peptide transporter CstA (703 aa).

A run of 16 helical transmembrane segments spans residues 6–26 (TKIL…YLAL), 29–49 (GESV…MIGY), 87–107 (VLFG…GPIL), 118–138 (LWIL…VLFI), 162–182 (VAMV…AMVV), 190–210 (PWGL…GIYM), 221–241 (ASII…VIAA), 256–276 (LAIV…WFLL), 282–302 (LSTF…VLVA), 319–339 (GPVF…CGAI), 374–394 (AVAI…YFAI), 463–483 (LMAF…LTAV), 514–534 (GLLA…QGAI), 547–567 (FGVS…TILV), 574–594 (YTWV…YGGI), and 660–680 (AILC…CIGI).

It belongs to the peptide transporter carbon starvation (CstA) (TC 2.A.114) family.

The protein localises to the cell inner membrane. Involved in the uptake of dipeptides and tripeptides. May influence host-pathogen interactions. Involved in motility and agglutination, and has a role in stimulation of dendritic cells. This Campylobacter jejuni subsp. jejuni serotype O:2 (strain ATCC 700819 / NCTC 11168) protein is Peptide transporter CstA.